Reading from the N-terminus, the 470-residue chain is Uronate isomerase (470 aa).

The protein belongs to the metallo-dependent hydrolases superfamily. Uronate isomerase family.

The catalysed reaction is D-glucuronate = D-fructuronate. It carries out the reaction aldehydo-D-galacturonate = keto-D-tagaturonate. Its pathway is carbohydrate metabolism; pentose and glucuronate interconversion. This is Uronate isomerase from Escherichia coli O157:H7 (strain EC4115 / EHEC).